The primary structure comprises 172 residues: Cold-inducible RNA-binding protein (172 aa).

The RRM domain occupies 6 to 84 (GKLFVGGLSF…RQIRVDQAGK (79 aa)). Residues 69-172 (GKSVDGRQIR…SYDSYATHNE (104 aa)) are disordered. Gly residues-rich tracts occupy residues 93-106 (YRGG…FFRG) and 114-125 (FSRGGGDRGYGG). A phosphoserine mark is found at serine 130, serine 138, serine 146, serine 156, serine 159, and serine 163. Low complexity predominate over residues 138–172 (SRDYYSSRSQSGGYSDRSSGGSYRDSYDSYATHNE).

Interacts with EIF4G1. Associates with ribosomes. In terms of processing, methylated on arginine residues. Methylation of the RGG motifs is a prerequisite for recruitment into SGs. Post-translationally, phosphorylated by CK2, GSK3A and GSK3B. Phosphorylation by GSK3B increases RNA-binding activity to the TXN 3'-UTR transcript upon exposure to UV radiation.

It localises to the nucleus. The protein localises to the nucleoplasm. The protein resides in the cytoplasm. Functionally, cold-inducible mRNA binding protein that plays a protective role in the genotoxic stress response by stabilizing transcripts of genes involved in cell survival. Acts as a translational activator. Seems to play an essential role in cold-induced suppression of cell proliferation. Binds specifically to the 3'-untranslated regions (3'-UTRs) of stress-responsive transcripts RPA2 and TXN. Acts as a translational repressor. Promotes assembly of stress granules (SGs), when overexpressed. The polypeptide is Cold-inducible RNA-binding protein (CIRBP) (Pongo abelii (Sumatran orangutan)).